Here is a 181-residue protein sequence, read N- to C-terminus: Protein TrbB (181 aa).

The N-terminal stretch at 1 to 22 (MSLTKSLLFTLLLSAAAVQAST) is a signal peptide. The Thioredoxin domain occupies 37 to 172 (TQPAQPAAGT…FMARVDTVLQ (136 aa)).

The protein localises to the periplasm. This chain is Protein TrbB (trbB), found in Escherichia coli (strain K12).